The primary structure comprises 201 residues: Recombination protein RecR (201 aa).

A C4-type zinc finger spans residues 60 to 75 (CSRCGNVDTVDPCTVC). One can recognise a Toprim domain in the interval 83–178 (SVIIVVEDVA…KITRLAHGVP (96 aa)).

Belongs to the RecR family.

In terms of biological role, may play a role in DNA repair. It seems to be involved in an RecBC-independent recombinational process of DNA repair. It may act with RecF and RecO. This is Recombination protein RecR from Rhizobium rhizogenes (strain K84 / ATCC BAA-868) (Agrobacterium radiobacter).